The sequence spans 599 residues: Putative sensor histidine kinase NtrY-like (599 aa).

4 helical membrane passes run 17–37 (ILIL…FYVI), 44–64 (FSTI…LGIL), 85–105 (IVIA…VFSV), and 285–305 (IMFI…GVLF). The HAMP domain maps to 307–361 (AQIVKPIKKLVTATDKVKDGDLTVQVPENEVDKDEIGTLYVAFNRMIKQLSRQQR). The region spanning 378–589 (KVAHEIKNPL…IIDIKFDLKE (212 aa)) is the Histidine kinase domain. At H381 the chain carries Phosphohistidine; by autocatalysis.

The protein resides in the cell membrane. The enzyme catalyses ATP + protein L-histidine = ADP + protein N-phospho-L-histidine.. Its function is as follows. Member of the two-component regulatory system RT0603/RT0550. This chain is Putative sensor histidine kinase NtrY-like, found in Rickettsia typhi (strain ATCC VR-144 / Wilmington).